Reading from the N-terminus, the 209-residue chain is Scoloptoxin SSD346 (209 aa).

A signal peptide spans 1-22; that stretch reads NILLSSTLFVLLMFQIIGSGLG.

In terms of processing, contains 2 disulfide bonds. Expressed by the venom gland.

The protein resides in the secreted. Functionally, may act as a voltage-gated calcium channel inhibitor. The chain is Scoloptoxin SSD346 from Scolopendra dehaani (Thai centipede).